Reading from the N-terminus, the 47-residue chain is Large ribosomal subunit protein eL40 (47 aa).

This sequence belongs to the eukaryotic ribosomal protein eL40 family.

The sequence is that of Large ribosomal subunit protein eL40 from Methanococcus maripaludis (strain C5 / ATCC BAA-1333).